Reading from the N-terminus, the 614-residue chain is MWMAWCVAALSVVAVCGTSHETNTVLRVTKDVLSNAISGMLQQSDALHSALREVPLGVGDIPYNDFHVRGPPPVYTNGKKLDGIYQYGHIETNDNTAQLGGKYRYGEILESEGSIRDLRNSGYRSAENAYGGHRGLGRYRAAPVGRLHRRELQPGEIPPGVATGAVGPGGLLGTGGMLAADGILAGQGGLLGGGGLLGDGGLLGGGGVLGVLGEGGILSTVQGITGLRIVELTLPRVSVRLLPGVGVYLSLYTRVAINGKSLIGFLDIAVEVNITAKVRLTMDRTGYPRLVIERCDTLLGGIKVKLLRGLLPNLVDNLVNRVLADVLPDLLCPIVDVVLGLVNDQLGLVDSLIPLGILGSVQYTFSSLPLVTGEFLELDLNTLVGEAGGGLIDYPLGWPAVSPKPMPELPPMGDNTKSQLAMSANFLGSVLTLLQKQHALDLDITNGMFEELPPLTTATLGALIPKVFQQYPESCPLIIRIQVLNPPSVMLQKDKALVKVLATAEVMVSQPKDLETTICLIDVDTEFLASFSTEGDKLMIDAKLEKTSLNLRTSNVGNFDIGLMEVLVEKIFDLAFMPAMNAVLGSGVPLPKILNIDFSNADIDVLEDLLVLSA.

The signal sequence occupies residues 1 to 18; the sequence is MWMAWCVAALSVVAVCGT. Residue Asn273 is glycosylated (N-linked (GlcNAc...) asparagine). Cys295 and Cys332 form a disulfide bridge.

Belongs to the BPI/LBP/Plunc superfamily. BPI/LBP family. Expressed in nasal tissue.

It is found in the secreted. The protein resides in the cytoplasm. Its function is as follows. May have the capacity to recognize and bind specific classes of odorants. May act as a carrier molecule, transporting odorants across the mucus layer to access receptor sites. May serve as a primary defense mechanism by recognizing and removing potentially harmful odorants or pathogenic microorganisms from the mucosa or clearing excess odorant from mucus to enable new odorant stimuli to be received. The polypeptide is BPI fold-containing family B member 4 (BPIFB4) (Homo sapiens (Human)).